The following is a 72-amino-acid chain: Translation initiation factor IF-1 (72 aa).

An S1-like domain is found at 1-72 (MAKDDVIEVE…TRGRITYRYK (72 aa)). The residue at position 60 (Y60) is a Phosphotyrosine.

This sequence belongs to the IF-1 family. Component of the 30S ribosomal translation pre-initiation complex which assembles on the 30S ribosome in the order IF-2 and IF-3, IF-1 and N-formylmethionyl-tRNA(fMet); mRNA recruitment can occur at any time during PIC assembly.

The protein localises to the cytoplasm. In terms of biological role, one of the essential components for the initiation of protein synthesis. Stabilizes the binding of IF-2 and IF-3 on the 30S subunit to which N-formylmethionyl-tRNA(fMet) subsequently binds. Helps modulate mRNA selection, yielding the 30S pre-initiation complex (PIC). Upon addition of the 50S ribosomal subunit IF-1, IF-2 and IF-3 are released leaving the mature 70S translation initiation complex. This Bacillus pumilus (strain SAFR-032) protein is Translation initiation factor IF-1.